Consider the following 254-residue polypeptide: Coiled-coil domain-containing protein 152 (254 aa).

A coiled-coil region spans residues 61–246; the sequence is SIKEECATLH…LEQRLSVGKD (186 aa).

Detected in stomach.

The sequence is that of Coiled-coil domain-containing protein 152 (CCDC152) from Homo sapiens (Human).